The sequence spans 427 residues: Serine--tRNA ligase (427 aa).

An L-serine-binding site is contributed by 233-235 (TAE). 264–266 (RSE) is an ATP binding site. L-serine is bound at residue E287. 351–354 (EISS) contributes to the ATP binding site. S386 serves as a coordination point for L-serine.

Belongs to the class-II aminoacyl-tRNA synthetase family. Type-1 seryl-tRNA synthetase subfamily. As to quaternary structure, homodimer. The tRNA molecule binds across the dimer.

It is found in the cytoplasm. It carries out the reaction tRNA(Ser) + L-serine + ATP = L-seryl-tRNA(Ser) + AMP + diphosphate + H(+). The enzyme catalyses tRNA(Sec) + L-serine + ATP = L-seryl-tRNA(Sec) + AMP + diphosphate + H(+). It participates in aminoacyl-tRNA biosynthesis; selenocysteinyl-tRNA(Sec) biosynthesis; L-seryl-tRNA(Sec) from L-serine and tRNA(Sec): step 1/1. Functionally, catalyzes the attachment of serine to tRNA(Ser). Is also able to aminoacylate tRNA(Sec) with serine, to form the misacylated tRNA L-seryl-tRNA(Sec), which will be further converted into selenocysteinyl-tRNA(Sec). The polypeptide is Serine--tRNA ligase (Thiobacillus denitrificans (strain ATCC 25259 / T1)).